The following is a 400-amino-acid chain: ELAV-like protein 4 (400 aa).

The disordered stretch occupies residues 12 to 48 (TMEPQVSNGPTSNTSNGPSSNSRNCPSPMQTGAATDD). The span at 18 to 33 (SNGPTSNTSNGPSSNS) shows a compositional bias: low complexity. The span at 34 to 44 (RNCPSPMQTGA) shows a compositional bias: polar residues. 3 consecutive RRM domains span residues 51–158 (TNLI…YARP), 166–246 (ANLY…FANN), and 317–395 (WCIF…FKTN).

Belongs to the RRM elav family.

It localises to the cytoplasm. It is found in the perikaryon. The protein localises to the cell projection. The protein resides in the axon. Its subcellular location is the dendrite. It localises to the growth cone. Functionally, RNA-binding protein that is involved in the post-transcriptional regulation of mRNAs. Plays a role in the regulation of mRNA stability, alternative splicing and translation. Binds to AU-rich element (ARE) sequences in the 3' untranslated region (3'UTR) of target mRNAs. Mainly plays a role in neuron-specific RNA processing. The protein is ELAV-like protein 4 (elavl4) of Xenopus tropicalis (Western clawed frog).